We begin with the raw amino-acid sequence, 393 residues long: UDP-galactose translocator (393 aa).

Helical transmembrane passes span 3 to 23 (AVGS…AGAL), 37 to 57 (YISL…IRYA), 65 to 85 (FFAT…CLLL), 97 to 117 (LVLF…KLAV), 140 to 160 (TFQV…VLML), 169 to 189 (WASL…QAGG), 200 to 220 (GVGL…GVYF), 238 to 258 (LGLF…GTAV), 269 to 289 (PAVW…AVVV), and 315 to 335 (LFGF…IGAV). A disordered region spans residues 353 to 393 (APTSGPCTHQQPPGQPPPPQLSSHHGDLSTEPFLPKSVLVK).

It belongs to the nucleotide-sugar transporter family. SLC35A subfamily. Interacts with SLC35A3; the interaction is reduced in the presence of SLC35A4. Found in a complex with SLC35A3 and SLC35A4.

The protein resides in the golgi apparatus membrane. The catalysed reaction is UMP(out) + UDP-alpha-D-galactose(in) = UMP(in) + UDP-alpha-D-galactose(out). The enzyme catalyses UDP-N-acetyl-alpha-D-galactosamine(in) + UMP(out) = UDP-N-acetyl-alpha-D-galactosamine(out) + UMP(in). It catalyses the reaction UMP(out) + UDP-alpha-D-glucose(in) = UMP(in) + UDP-alpha-D-glucose(out). It carries out the reaction UMP(out) + UDP-N-acetyl-alpha-D-glucosamine(in) = UMP(in) + UDP-N-acetyl-alpha-D-glucosamine(out). The catalysed reaction is UDP-alpha-D-galactose(in) + AMP(out) = UDP-alpha-D-galactose(out) + AMP(in). The enzyme catalyses UDP-alpha-D-galactose(in) + CMP(out) = UDP-alpha-D-galactose(out) + CMP(in). It catalyses the reaction UDP-N-acetyl-alpha-D-galactosamine(out) + UDP-alpha-D-galactose(in) = UDP-N-acetyl-alpha-D-galactosamine(in) + UDP-alpha-D-galactose(out). It carries out the reaction UDP-N-acetyl-alpha-D-glucosamine(out) + UDP-alpha-D-galactose(in) = UDP-N-acetyl-alpha-D-glucosamine(in) + UDP-alpha-D-galactose(out). The catalysed reaction is UDP-alpha-D-galactose(in) + UDP-alpha-D-glucose(out) = UDP-alpha-D-galactose(out) + UDP-alpha-D-glucose(in). The enzyme catalyses UMP(out) + CMP(in) = UMP(in) + CMP(out). It catalyses the reaction UMP(out) + AMP(in) = UMP(in) + AMP(out). Its function is as follows. Transports uridine diphosphate galactose (UDP-galactose) from the cytosol into the Golgi apparatus, functioning as an antiporter that exchanges UDP-galactose for UMP. It is also able to exchange UDP-galactose for AMP and CMP, and to transport UDP-N-acetylgalactosamine (UDP-GalNAc) and other nucleotide sugars. As a provider of UDP-galactose to galactosyltransferases present in the Golgi apparatus, it is necessary for globotriaosylceramide/globoside (Gb3Cer) synthesis from lactosylceramide. The polypeptide is UDP-galactose translocator (Bos taurus (Bovine)).